We begin with the raw amino-acid sequence, 226 residues long: Cytidylate kinase (226 aa).

12–20 (GPSGAGKGT) contributes to the ATP binding site.

It belongs to the cytidylate kinase family. Type 1 subfamily.

The protein resides in the cytoplasm. It catalyses the reaction CMP + ATP = CDP + ADP. The catalysed reaction is dCMP + ATP = dCDP + ADP. The protein is Cytidylate kinase of Colwellia psychrerythraea (strain 34H / ATCC BAA-681) (Vibrio psychroerythus).